We begin with the raw amino-acid sequence, 267 residues long: Thiamine pyrophosphokinase 2 (267 aa).

This sequence belongs to the thiamine pyrophosphokinase family. Expressed in leaves and at lower levels in flowers.

It localises to the cytoplasm. Its subcellular location is the cytosol. The enzyme catalyses thiamine + ATP = thiamine diphosphate + AMP + H(+). Its pathway is cofactor biosynthesis; thiamine diphosphate biosynthesis; thiamine diphosphate from thiamine: step 1/1. In terms of biological role, catalyzes the phosphorylation of thiamine to thiamine pyrophosphate (TPP). TPP is an active cofactor for enzymes involved in glycolysis and energy production. Plant leaves require high levels of TPP for photosynthesis and carbohydrate metabolism. The polypeptide is Thiamine pyrophosphokinase 2 (Arabidopsis thaliana (Mouse-ear cress)).